The sequence spans 335 residues: Glycerol-3-phosphate dehydrogenase [NAD(P)+] (335 aa).

The NADPH site is built by Trp14, Arg33, and Lys111. The sn-glycerol 3-phosphate site is built by Lys111, Gly140, and Ser142. Residue Ala144 coordinates NADPH. Sn-glycerol 3-phosphate-binding residues include Lys195, Asp248, Ser258, Arg259, and Asn260. Lys195 (proton acceptor) is an active-site residue. Arg259 is a binding site for NADPH. Positions 283 and 285 each coordinate NADPH.

The protein belongs to the NAD-dependent glycerol-3-phosphate dehydrogenase family.

It localises to the cytoplasm. The enzyme catalyses sn-glycerol 3-phosphate + NAD(+) = dihydroxyacetone phosphate + NADH + H(+). The catalysed reaction is sn-glycerol 3-phosphate + NADP(+) = dihydroxyacetone phosphate + NADPH + H(+). The protein operates within membrane lipid metabolism; glycerophospholipid metabolism. Its function is as follows. Catalyzes the reduction of the glycolytic intermediate dihydroxyacetone phosphate (DHAP) to sn-glycerol 3-phosphate (G3P), the key precursor for phospholipid synthesis. The protein is Glycerol-3-phosphate dehydrogenase [NAD(P)+] of Burkholderia mallei (strain NCTC 10247).